A 214-amino-acid polypeptide reads, in one-letter code: Ion-translocating oxidoreductase complex subunit G (214 aa).

A helical transmembrane segment spans residues 13 to 33; it reads ALLLGLFALVGVGLVALVQQF. FMN phosphoryl threonine is present on T180.

It belongs to the RnfG family. As to quaternary structure, the complex is composed of six subunits: RnfA, RnfB, RnfC, RnfD, RnfE and RnfG. FMN serves as cofactor.

Its subcellular location is the cell inner membrane. Part of a membrane-bound complex that couples electron transfer with translocation of ions across the membrane. The sequence is that of Ion-translocating oxidoreductase complex subunit G from Pseudomonas aeruginosa (strain UCBPP-PA14).